The primary structure comprises 450 residues: Bestrophin homolog 1 (450 aa).

At Met-1 to Ala-31 the chain is on the cytoplasmic side. The helical transmembrane segment at Val-32–Lys-51 threads the bilayer. The Extracellular segment spans residues Thr-52–Arg-60. A helical transmembrane segment spans residues Thr-61–Leu-82. The Cytoplasmic portion of the chain corresponds to Gly-83–Pro-242. A helical transmembrane segment spans residues Gln-243–Arg-260. Topologically, residues Gln-261–Pro-278 are extracellular. The helical transmembrane segment at Val-279–Leu-292 threads the bilayer. The Cytoplasmic portion of the chain corresponds to Lys-293 to Phe-450. Ca(2+)-binding residues include Asn-300, Asp-305, and Asp-308.

The protein belongs to the anion channel-forming bestrophin (TC 1.A.46) family. Calcium-sensitive chloride channel subfamily. In terms of assembly, forms oligomers.

The protein resides in the cell membrane. It carries out the reaction chloride(in) = chloride(out). Functionally, ligand-gated anion channel that allows the movement of chloride monoatomic anions across cell membranes when activated by Calcium (Ca2+). In Caenorhabditis elegans, this protein is Bestrophin homolog 1 (best-1).